Reading from the N-terminus, the 661-residue chain is Polyadenylate-binding protein, cytoplasmic and nuclear (661 aa).

Residues Met-1–Glu-11 are compositionally biased toward polar residues. The interval Met-1 to Gly-61 is disordered. Low complexity predominate over residues Ser-20–Asp-51. RRM domains lie at Ala-67–Arg-145, Gly-155–Ser-232, Thr-248–Lys-325, and Val-351–Arg-428. The interval Phe-473–Pro-563 is disordered. The segment covering Glu-501 to Gln-511 has biased composition (pro residues). Positions Gln-523–Pro-532 are enriched in polar residues. Over residues Gln-533–Gln-549 the composition is skewed to low complexity. A PABC domain is found at Pro-563–Asn-644.

It belongs to the polyadenylate-binding protein type-1 family.

Its subcellular location is the cytoplasm. It localises to the nucleus. Its function is as follows. Binds the poly(A) tail of mRNA. Appears to be an important mediator of the multiple roles of the poly(A) tail in mRNA biogenesis, stability and translation. In the nucleus, involved in both mRNA cleavage and polyadenylation. Is also required for efficient mRNA export to the cytoplasm. Acts in concert with a poly(A)-specific nuclease (PAN) to affect poly(A) tail shortening, which may occur concomitantly with either nucleocytoplasmic mRNA transport or translational initiation. In the cytoplasm, stimulates translation initiation and regulates mRNA decay through translation termination-coupled poly(A) shortening, probably mediated by PAN. This Lodderomyces elongisporus (strain ATCC 11503 / CBS 2605 / JCM 1781 / NBRC 1676 / NRRL YB-4239) (Yeast) protein is Polyadenylate-binding protein, cytoplasmic and nuclear (PAB1).